We begin with the raw amino-acid sequence, 132 residues long: MGFSSTVGSVLILTTLLICSVYLYSSVDVVSSKFTNAYSQHAESLQGKMNENLELVEITKLGDDIVLKLSNNGTETLSCEHWTVMYNGTPKAYIANQSYVAPMDTVQISINGSTPCRISLISEYGNKYYYKL.

The first 18 residues, 1-18, serve as a signal peptide directing secretion; the sequence is MGFSSTVGSVLILTTLLI. N-acetylcysteine is present on cysteine 19. A lipid anchor (S-archaeol cysteine) is attached at cysteine 19.

It to M.jannaschii FlaF.

The protein localises to the archaeal flagellum. The protein is Putative flagella-related protein F (flaF) of Methanococcus voltae.